The sequence spans 366 residues: MRVIIAGGGTGGHLFPGIALAESLIGKYPEAQIIFVGTPKGLEAKVIPKTGYELSFISIQGFVGKSFSEKAKSLKSLLKSMFESKNIINSFAPDIVFGVGGYASFPVVLAAFLKKIPTIILEQNTVPGLANKLLGKIASAVAITYPETIEYFSREKTYLTGTPIRKKILEGNKEKAKKLFDIEEGRITILILGGSLGARKINKAMTEGLSYLLPLKNRIQIIHQTGEADYNWVYNEYRNLSFRATVLPFIYDMVEAYSVADLVISRAGASTVAELTAIGKASILIPYPYAAYNHQEMNARRLLSRGACELILDRELNGEVLAKKINKILNKPEIMKEMEMASLAFGKPYAGEKIIEIAESLLRRKR.

UDP-N-acetyl-alpha-D-glucosamine-binding positions include 10 to 12, Asn-124, Arg-165, Ser-195, Ile-250, and Gln-295; that span reads TGG.

The protein belongs to the glycosyltransferase 28 family. MurG subfamily.

It is found in the cell inner membrane. It carries out the reaction di-trans,octa-cis-undecaprenyl diphospho-N-acetyl-alpha-D-muramoyl-L-alanyl-D-glutamyl-meso-2,6-diaminopimeloyl-D-alanyl-D-alanine + UDP-N-acetyl-alpha-D-glucosamine = di-trans,octa-cis-undecaprenyl diphospho-[N-acetyl-alpha-D-glucosaminyl-(1-&gt;4)]-N-acetyl-alpha-D-muramoyl-L-alanyl-D-glutamyl-meso-2,6-diaminopimeloyl-D-alanyl-D-alanine + UDP + H(+). It participates in cell wall biogenesis; peptidoglycan biosynthesis. Cell wall formation. Catalyzes the transfer of a GlcNAc subunit on undecaprenyl-pyrophosphoryl-MurNAc-pentapeptide (lipid intermediate I) to form undecaprenyl-pyrophosphoryl-MurNAc-(pentapeptide)GlcNAc (lipid intermediate II). In Thermodesulfovibrio yellowstonii (strain ATCC 51303 / DSM 11347 / YP87), this protein is UDP-N-acetylglucosamine--N-acetylmuramyl-(pentapeptide) pyrophosphoryl-undecaprenol N-acetylglucosamine transferase.